The chain runs to 137 residues: Kunitz-type trypsin inhibitor alpha chain (137 aa).

Cysteines 40 and 86 form a disulfide.

Belongs to the protease inhibitor I3 (leguminous Kunitz-type inhibitor) family. As to quaternary structure, heterodimer of an alpha and a beta chain linked by a disulfide bond.

Its function is as follows. Inhibition of trypsin. This Neltuma juliflora (Mesquite) protein is Kunitz-type trypsin inhibitor alpha chain.